Here is a 103-residue protein sequence, read N- to C-terminus: Histone H4, major (103 aa).

Residues 1–12 (MAGGKGGKGMGK) show a composition bias toward gly residues. Positions 1–29 (MAGGKGGKGMGKVGAKRHSKRSNKASIEG) are disordered. Residues K5, K8, K12, and K16 each carry the N6-acetyllysine modification. The segment covering 14-23 (GAKRHSKRSN) has biased composition (basic residues). A DNA-binding region spans residues 16–21 (KRHSKR).

Belongs to the histone H4 family. The nucleosome is a histone octamer containing two molecules each of H2A, H2B, H3 and H4 assembled in one H3-H4 heterotetramer and two H2A-H2B heterodimers. The octamer wraps approximately 147 bp of DNA.

The protein localises to the nucleus. Its subcellular location is the chromosome. In terms of biological role, core component of nucleosome. Nucleosomes wrap and compact DNA into chromatin, limiting DNA accessibility to the cellular machineries which require DNA as a template. Histones thereby play a central role in transcription regulation, DNA repair, DNA replication and chromosomal stability. DNA accessibility is regulated via a complex set of post-translational modifications of histones, also called histone code, and nucleosome remodeling. This chain is Histone H4, major, found in Tetrahymena pyriformis.